The primary structure comprises 195 residues: Probable WRKY transcription factor 56 (195 aa).

A compositionally biased stretch (polar residues) spans 1 to 10 (MEGVDNTNPM). Disordered stretches follow at residues 1–20 (MEGV…ENNN) and 70–93 (EMGG…KGKG). The WRKY DNA-binding region spans 108–173 (SDDDVLDDGY…YEGVHNHPCE (66 aa)).

Belongs to the WRKY group II-c family.

The protein localises to the nucleus. In terms of biological role, transcription factor. Interacts specifically with the W box (5'-(T)TGAC[CT]-3'), a frequently occurring elicitor-responsive cis-acting element. The polypeptide is Probable WRKY transcription factor 56 (WRKY56) (Arabidopsis thaliana (Mouse-ear cress)).